Reading from the N-terminus, the 155-residue chain is Ribosome maturation factor RimP (155 aa).

The protein belongs to the RimP family.

It localises to the cytoplasm. Required for maturation of 30S ribosomal subunits. The sequence is that of Ribosome maturation factor RimP from Prochlorococcus marinus (strain MIT 9312).